Reading from the N-terminus, the 367-residue chain is MELITNVSEYEQLAKQKLPKMIYDYYASGAEDQWTLKENREAFSRILFRPRILIDVSRINMATNVLGFNISMPIMIAPSAMQKMAHPEGELATARAASAAGTIMTLSSWSTSSVEEVNSAAPGIRFFQLYVYKDRNIVRQLVRRAELAGFKAIALTVDTPRLGRREADIKNRFNLPPHLVLKNFEALDLGKMDKTNDSGLASYVASQVDRSLSWTDVKWLQTITSLPILVKGVMTAEDTRLAVESGAAGIIVSNHGARQLDYVPATISCLEEVVREAKGRLPVFLDGGVRRGTDVFKALALGASGVFIGRPVLFSLAVDGEAGVRKVLQMLRDELELTMALSGCTSLAEITRNHVITDSDRIRRSRL.

Residues 1-360 (MELITNVSEY…TRNHVITDSD (360 aa)) enclose the FMN hydroxy acid dehydrogenase domain. Glyoxylate is bound at residue Tyr-25. FMN is bound by residues 78–80 (PSA), Ser-107, 128–130 (QLY), and Thr-156. A glyoxylate-binding site is contributed by Tyr-130. A glyoxylate-binding site is contributed by Arg-165. FMN-binding residues include Lys-231 and Ser-253. His-255 and Arg-258 together coordinate glyoxylate. Catalysis depends on His-255, which acts as the Proton acceptor. FMN-binding positions include 286 to 290 (DGGVR) and 309 to 310 (GR). The Microbody targeting signal signature appears at 365–367 (SRL).

Belongs to the FMN-dependent alpha-hydroxy acid dehydrogenase family. Homotetramer. The cofactor is FMN.

It localises to the peroxisome. It carries out the reaction glycolate + O2 = glyoxylate + H2O2. The protein operates within photosynthesis; photorespiration; glycine from 2-phosphoglycolate: step 2/3. Its function is as follows. Catalyzes the oxidation of glycolate to glyoxylate, with a reduction of O2 to H2O2. Is a key enzyme in photorespiration in green plants. The protein is Glycolate oxidase 3 (GLO3) of Oryza sativa subsp. indica (Rice).